A 210-amino-acid chain; its full sequence is Thymidylate kinase (210 aa).

11–18 provides a ligand contact to ATP; it reads GLEGAGKS.

This sequence belongs to the thymidylate kinase family.

The catalysed reaction is dTMP + ATP = dTDP + ADP. Its function is as follows. Phosphorylation of dTMP to form dTDP in both de novo and salvage pathways of dTTP synthesis. This Histophilus somni (strain 129Pt) (Haemophilus somnus) protein is Thymidylate kinase.